The primary structure comprises 525 residues: Bifunctional purine biosynthesis protein PurH (525 aa).

One can recognise an MGS-like domain in the interval 1–147; sequence MTKIERALIS…KNWAHVAIVT (147 aa).

This sequence belongs to the PurH family.

It carries out the reaction (6R)-10-formyltetrahydrofolate + 5-amino-1-(5-phospho-beta-D-ribosyl)imidazole-4-carboxamide = 5-formamido-1-(5-phospho-D-ribosyl)imidazole-4-carboxamide + (6S)-5,6,7,8-tetrahydrofolate. The catalysed reaction is IMP + H2O = 5-formamido-1-(5-phospho-D-ribosyl)imidazole-4-carboxamide. Its pathway is purine metabolism; IMP biosynthesis via de novo pathway; 5-formamido-1-(5-phospho-D-ribosyl)imidazole-4-carboxamide from 5-amino-1-(5-phospho-D-ribosyl)imidazole-4-carboxamide (10-formyl THF route): step 1/1. The protein operates within purine metabolism; IMP biosynthesis via de novo pathway; IMP from 5-formamido-1-(5-phospho-D-ribosyl)imidazole-4-carboxamide: step 1/1. The sequence is that of Bifunctional purine biosynthesis protein PurH from Chromobacterium violaceum (strain ATCC 12472 / DSM 30191 / JCM 1249 / CCUG 213 / NBRC 12614 / NCIMB 9131 / NCTC 9757 / MK).